Reading from the N-terminus, the 711-residue chain is Progesterone receptor (711 aa).

A modulating, Pro-Rich region spans residues 1-347 (MEDKSKQCLQ…YGFDALPRKI (347 aa)). NR C4-type zinc fingers lie at residues 348-368 (CLIC…CGSC) and 384-408 (CAGR…LKKC). Positions 348–420 (CLICSDEASG…AGMVLGGRKF (73 aa)) form a DNA-binding region, nuclear receptor. The NR LBD domain maps to 457–691 (QEVQYFPELL…EFPEMMTEVI (235 aa)).

It belongs to the nuclear hormone receptor family. NR3 subfamily. In terms of tissue distribution, expressed in all tissues examined: highly expressed in testis and brain. Also expressed in heart, lung, liver, kidney, stomach and small intestine.

It is found in the nucleus. Its function is as follows. The steroid hormones and their receptors are involved in the regulation of eukaryotic gene expression and affect cellular proliferation and differentiation in target tissues. The protein is Progesterone receptor (pgr) of Rana dybowskii (Dybovsky's frog).